Reading from the N-terminus, the 590-residue chain is Glutamine--tRNA ligase (590 aa).

The short motif at 55-65 is the 'HIGH' region element; the sequence is PEPNGYLHIGH. ATP is bound by residues 56 to 58 and 62 to 68; these read EPN and HIGHAKS. L-glutamine is bound by residues aspartate 93 and tyrosine 238. ATP is bound by residues threonine 257 and 292–293; that span reads RL. The 'KMSKS' region signature appears at 299–303; the sequence is ITSKR.

The protein belongs to the class-I aminoacyl-tRNA synthetase family. In terms of assembly, monomer.

It localises to the cytoplasm. The catalysed reaction is tRNA(Gln) + L-glutamine + ATP = L-glutaminyl-tRNA(Gln) + AMP + diphosphate. The sequence is that of Glutamine--tRNA ligase from Polynucleobacter asymbioticus (strain DSM 18221 / CIP 109841 / QLW-P1DMWA-1) (Polynucleobacter necessarius subsp. asymbioticus).